The following is a 181-amino-acid chain: Ribonuclease M5 (181 aa).

The Toprim domain maps to 3–86; the sequence is KEVIVVEGRD…AYISQEEGTK (84 aa). Residues glutamate 9, aspartate 55, and aspartate 57 each contribute to the Mg(2+) site.

Belongs to the ribonuclease M5 family. Mg(2+) is required as a cofactor.

Its subcellular location is the cytoplasm. It catalyses the reaction Endonucleolytic cleavage of RNA, removing 21 and 42 nucleotides, respectively, from the 5'- and 3'-termini of a 5S-rRNA precursor.. Functionally, required for correct processing of both the 5' and 3' ends of 5S rRNA precursor. Cleaves both sides of a double-stranded region yielding mature 5S rRNA in one step. This Clostridium botulinum (strain Hall / ATCC 3502 / NCTC 13319 / Type A) protein is Ribonuclease M5.